The sequence spans 84 residues: Small ribosomal subunit protein eS27 (84 aa).

Residues 1–16 (MPLAKDLLHPTPEEEK) show a composition bias toward basic and acidic residues. Residues 1 to 23 (MPLAKDLLHPTPEEEKRKHKKKR) form a disordered region. A C4-type zinc finger spans residues 37–59 (CPGCYKITTVFSHAQTVVLCVGC).

It belongs to the eukaryotic ribosomal protein eS27 family. Component of the small ribosomal subunit. Part of the small subunit (SSU) processome, composed of more than 70 proteins and the RNA chaperone small nucleolar RNA (snoRNA) U3. Zn(2+) serves as cofactor.

It is found in the cytoplasm. Its subcellular location is the nucleus. The protein resides in the nucleolus. Its function is as follows. Component of the small ribosomal subunit. The ribosome is a large ribonucleoprotein complex responsible for the synthesis of proteins in the cell. Required for proper rRNA processing and maturation of 18S rRNAs. Part of the small subunit (SSU) processome, first precursor of the small eukaryotic ribosomal subunit. During the assembly of the SSU processome in the nucleolus, many ribosome biogenesis factors, an RNA chaperone and ribosomal proteins associate with the nascent pre-rRNA and work in concert to generate RNA folding, modifications, rearrangements and cleavage as well as targeted degradation of pre-ribosomal RNA by the RNA exosome. The sequence is that of Small ribosomal subunit protein eS27 (rps27) from Xenopus laevis (African clawed frog).